We begin with the raw amino-acid sequence, 320 residues long: Putative S-adenosyl-L-methionine-dependent methyltransferase MAP_4078 (320 aa).

S-adenosyl-L-methionine contacts are provided by residues Asp-132 and 161-162; that span reads DL. Residues 294 to 320 form a disordered region; that stretch reads PPHDIEDAIPQTRFVAAQRTERTRPDR.

Belongs to the UPF0677 family.

Exhibits S-adenosyl-L-methionine-dependent methyltransferase activity. This chain is Putative S-adenosyl-L-methionine-dependent methyltransferase MAP_4078, found in Mycolicibacterium paratuberculosis (strain ATCC BAA-968 / K-10) (Mycobacterium paratuberculosis).